Here is a 486-residue protein sequence, read N- to C-terminus: Cobyric acid synthase (486 aa).

One can recognise a GATase cobBQ-type domain in the interval 248–439; it reads MLRVVVPVLP…VHGLFDTPAA (192 aa). The Nucleophile role is filled by cysteine 329. Histidine 431 is a catalytic residue.

The protein belongs to the CobB/CobQ family. CobQ subfamily.

The protein operates within cofactor biosynthesis; adenosylcobalamin biosynthesis. Functionally, catalyzes amidations at positions B, D, E, and G on adenosylcobyrinic A,C-diamide. NH(2) groups are provided by glutamine, and one molecule of ATP is hydrogenolyzed for each amidation. In Paraburkholderia phytofirmans (strain DSM 17436 / LMG 22146 / PsJN) (Burkholderia phytofirmans), this protein is Cobyric acid synthase.